We begin with the raw amino-acid sequence, 381 residues long: Metallophosphoesterase 1 (381 aa).

A helical membrane pass occupies residues Leu-15 to Ile-35. A divalent metal cation is bound by residues Asp-59, Asp-101, Asn-139, His-234, His-288, and His-290. The chain crosses the membrane as a helical span at residues Thr-341 to Leu-361. Positions Lys-377 to Leu-381 match the Di-lysine motif motif.

It belongs to the metallophosphoesterase superfamily. MPPE1 family. Requires Mn(2+) as cofactor.

It localises to the endoplasmic reticulum-Golgi intermediate compartment membrane. Metallophosphoesterase that catalyzes the removal of a side-chain ethanolamine-phosphate (EtNP) from the second mannose of the GPI-anchor protein intermediate. Participates in the glycan remodeling steps of GPI-anchor maturation to allow an efficient transport of GPI-anchor proteins from the endoplasmic reticulum to the Golgi. In Danio rerio (Zebrafish), this protein is Metallophosphoesterase 1.